A 221-amino-acid chain; its full sequence is UPF0758 protein HI_0952 (221 aa).

The MPN domain maps to 99–221; sequence IINDPETVKL…CYSFAENCLL (123 aa). Zn(2+) is bound by residues H170, H172, and D183. Positions 170–183 match the JAMM motif motif; that stretch reads HNHPSGITEPSYSD.

Belongs to the UPF0758 family.

In Haemophilus influenzae (strain ATCC 51907 / DSM 11121 / KW20 / Rd), this protein is UPF0758 protein HI_0952.